Reading from the N-terminus, the 92-residue chain is Small ribosomal subunit protein uS19 (92 aa).

The protein belongs to the universal ribosomal protein uS19 family.

Functionally, protein S19 forms a complex with S13 that binds strongly to the 16S ribosomal RNA. In Bacillus mycoides (strain KBAB4) (Bacillus weihenstephanensis), this protein is Small ribosomal subunit protein uS19.